We begin with the raw amino-acid sequence, 284 residues long: MQNLTATLLVSCPDQPGIVAQIAQFIYQNQGNIIHADQHTDFSSGLFLNRVEWQLDNFRLSRPELLSAWSQLAEQLQATWQIHFSDQLPRLALWVSKQDHCLLDILWRWRSGELRCEIPLIISNHPDLKSIADQFGIDFHCLPITKENKLAQETAELALLKQYQIDLVVLAKYLQILTTDFVVQFPNIINIHHSFLPAFPGANPYHRAHERGVKIIGATAHYATAQLDEGPIIEQDVVRVSHRDNVDDLIRKGRDLERVVLARAVRLHLQHRILVYDNRTVVFA.

Residues 7 to 90 enclose the ACT domain; sequence TLLVSCPDQP…QIHFSDQLPR (84 aa). Residue aspartate 228 is part of the active site.

It belongs to the PurU family.

It carries out the reaction (6R)-10-formyltetrahydrofolate + H2O = (6S)-5,6,7,8-tetrahydrofolate + formate + H(+). It functions in the pathway purine metabolism; IMP biosynthesis via de novo pathway; formate from 10-formyl-5,6,7,8-tetrahydrofolate: step 1/1. Functionally, catalyzes the hydrolysis of 10-formyltetrahydrofolate (formyl-FH4) to formate and tetrahydrofolate (FH4). The protein is Formyltetrahydrofolate deformylase of Synechocystis sp. (strain ATCC 27184 / PCC 6803 / Kazusa).